A 275-amino-acid polypeptide reads, in one-letter code: MKQSKGSRNYVFYAQHPEKEEEVPSWHEIKQTPVIMATIKGPGPAKYLRSSCTGYIAHDISMFQEPAYSLHTRHTKKRIIDINSPGPCYFLNPKVTRFGISTCPQVPMEERISNPRINCMPASCKYNLEKTRPSGERQPPQYTFGYRCPYRVMDPNPAPNQYQLPVTLGTNIPVFRAAPSYSLASTNKNWFHKENIAGGPGPAMHTRPEPSVYQNRSPLFSMAKRFGCPLDHTHRPGPGSHDIQPVTVHKPRIPAFTMGIKHSPHLCPLIVDICD.

STPGR repeat units lie at residues Pro200–Arg225 and Pro236–Lys261.

It belongs to the CIMAP family.

The polypeptide is Protein CIMAP1C (CIMAP1C) (Mus musculus (Mouse)).